A 240-amino-acid polypeptide reads, in one-letter code: Uridylate kinase (240 aa).

ATP-binding positions include 15–18, Gly-58, and Arg-62; that span reads KISG. UMP is bound by residues Asp-77 and 138 to 145; that span reads TGNPLFTT. Residues Thr-165, Tyr-171, and Asp-174 each contribute to the ATP site.

The protein belongs to the UMP kinase family. In terms of assembly, homohexamer.

It localises to the cytoplasm. It catalyses the reaction UMP + ATP = UDP + ADP. It functions in the pathway pyrimidine metabolism; CTP biosynthesis via de novo pathway; UDP from UMP (UMPK route): step 1/1. Inhibited by UTP. In terms of biological role, catalyzes the reversible phosphorylation of UMP to UDP. This chain is Uridylate kinase, found in Buchnera aphidicola subsp. Schizaphis graminum (strain Sg).